Consider the following 906-residue polypeptide: MTLQPAILSEPDTPAPAEALTRVSPMMEQYHEIKAANPGLLLFYRMGDFYELFFEDAEIAARALGITLTKRGKHKGQDIPMCGVPVERSDDYLHRLIALGHRVAVCEQTEDPAAARARKSVVRRDVVRLITPGTLTEDTLLDARTNNYLLAIARVRGSTGGDRLGLAWIDISTAEFIVTECALGELAATLARINPNEAIVTDALYSDPELGPLLRELAAVTPLTRDVFDSATAERRLCDYFAVATMDGLAAMSRLEATAAAACITYVERTQLGQKPPLSPPSREIAGATMAIDPATRANLELTRTLAGERRGSLLDAIDCTVTAAGSRLLAQRLAAPLTDAGAIAHRLDAVEAFVADPILRDGLRATLRAAPDLARALARLSVGRGGPRDLAALRDGLLAADAALAQLAAATSLPQEILAAMAALRRPSRQLADEFSRALADELPLQKRDGGFVRANYQAALDETRALRDASRQVVAAMQARYADAAGVKGLKIRHNNVLGYFVEVTAQHGERLMAAPMNATFIHRQTLAGQVRFTTAELGEIEAKIANAGERALGLELEIFEKLTAMVIAATDDLRAAAQAFATLDVTLALAKLAIDDNYVRPEVDGSLSFAIEGGRHPVVEQALKRDGQPFIANACDLSPGPAQSSGQIWLITGPNMAGKSTFLRQNALIALLAQIGAFVPAARARIGIVDRLFSRVGAADDLARGRSTFMVEMVETAVILNQASERALVILDEIGRGTATFDGLSIAWAAIEHLHESNRCRALFATHYHELTALSGKLPRVFNATVRVKEWHGEVVFLHEVMPGSADRSYGIQVAKLAGLPPSVIARAKTVLAKLEANDRGQSARALADDLPLFALTARAPAEALPPTEAEQLIAALQALHPDELTPREALDALYALKAKLPK.

An ATP-binding site is contributed by 656–663 (GPNMAGKS).

Belongs to the DNA mismatch repair MutS family.

This protein is involved in the repair of mismatches in DNA. It is possible that it carries out the mismatch recognition step. This protein has a weak ATPase activity. This Rhodopseudomonas palustris (strain BisA53) protein is DNA mismatch repair protein MutS.